The primary structure comprises 306 residues: MQKIIVLIGPTGIGKTDLALDLAPKINAEIISGDSMQIYQEVSIGTAKPTDEELKRVKHYLINQRSIFEEYSVKDFVAEGTKAVDKIVADGAIPLVVGGTGFYINALVNQLQLGEPGEYQTSVDPQWEEYLKENGENKLWDLLQAKDPAAAEKIAPQNSRRSLRALTVISRTGKLFSEQQQKINPRYDALILGLNSDREEVYQRINMRVDKMMEHGLLQEAKFVYENRSREHQVIQAIGYKEFFPYFSGEKTLDECVNKLKQASRKYAKRQLTYFKHQLPVVWLDPLQDEKVSEKALRKINEFLNK.

9-16 (GPTGIGKT) lines the ATP pocket. 11 to 16 (TGIGKT) lines the substrate pocket. Residues 34 to 37 (DSMQ) are interaction with substrate tRNA.

The protein belongs to the IPP transferase family. Monomer. Mg(2+) serves as cofactor.

The enzyme catalyses adenosine(37) in tRNA + dimethylallyl diphosphate = N(6)-dimethylallyladenosine(37) in tRNA + diphosphate. In terms of biological role, catalyzes the transfer of a dimethylallyl group onto the adenine at position 37 in tRNAs that read codons beginning with uridine, leading to the formation of N6-(dimethylallyl)adenosine (i(6)A). The polypeptide is tRNA dimethylallyltransferase (Lactobacillus johnsonii (strain CNCM I-12250 / La1 / NCC 533)).